Here is a 792-residue protein sequence, read N- to C-terminus: Endonuclease MutS2 (792 aa).

An ATP-binding site is contributed by 334–341 (GPNTGGKT). Residues 717–792 (IDLRGMMLSE…ENGVTVVELK (76 aa)) enclose the Smr domain.

The protein belongs to the DNA mismatch repair MutS family. MutS2 subfamily. In terms of assembly, homodimer. Binds to stalled ribosomes, contacting rRNA.

Its function is as follows. Endonuclease that is involved in the suppression of homologous recombination and thus may have a key role in the control of bacterial genetic diversity. Functionally, acts as a ribosome collision sensor, splitting the ribosome into its 2 subunits. Detects stalled/collided 70S ribosomes which it binds and splits by an ATP-hydrolysis driven conformational change. Acts upstream of the ribosome quality control system (RQC), a ribosome-associated complex that mediates the extraction of incompletely synthesized nascent chains from stalled ribosomes and their subsequent degradation. Probably generates substrates for RQC. The protein is Endonuclease MutS2 of Ruminiclostridium cellulolyticum (strain ATCC 35319 / DSM 5812 / JCM 6584 / H10) (Clostridium cellulolyticum).